We begin with the raw amino-acid sequence, 157 residues long: Snaclec 3 (157 aa).

Residues 1–23 form the signal peptide; the sequence is MGRLIFLSFGWLVVFLSLSGTGA. Disulfide bonds link cysteine 27–cysteine 38, cysteine 55–cysteine 153, and cysteine 128–cysteine 145. In terms of domain architecture, C-type lectin spans 34–154; the sequence is YGQHCYRAFS…CAGHYPFICK (121 aa).

Belongs to the snaclec family. As to quaternary structure, heterodimer; disulfide-linked. As to expression, expressed by the venom gland.

The protein localises to the secreted. Functionally, interferes with one step of hemostasis (modulation of platelet aggregation, or coagulation cascade, for example). The sequence is that of Snaclec 3 from Bitis gabonica (Gaboon adder).